The primary structure comprises 757 residues: POU domain, class 2, transcription factor 1 (757 aa).

Disordered regions lie at residues 1–43 (MKLH…QTNG), 271–295 (AATP…SLEE), 375–398 (SLSN…RRKK), and 532–574 (VSSV…TSPL). Polar residues-rich tracts occupy residues 19 to 43 (RMNN…QTNG) and 275 to 285 (VQQLPQSQTTP). One can recognise a POU-specific domain in the interval 294–368 (EEPSDLEELE…LLEKWLNDAE (75 aa)). A DNA-binding region (homeobox) is located at residues 395–454 (RRKKRTSIETNIRVALEKSFLENQKPTSEEITMIADQLNMEKEVIRVWFCNRRQKEKRIN).

Belongs to the POU transcription factor family. Class-2 subfamily.

The protein resides in the cytoplasm. Its subcellular location is the nucleus. Functionally, transcription factor that binds to the octamer motif (5'-ATTTGCAT-3') and activates the promoters of the genes for some small nuclear RNAs (snRNA) and histone H2B. Acts downstream of Notch signaling during radial glia formation. Regulates apoptosis, possibly via an FGF-signaling pathway. The polypeptide is POU domain, class 2, transcription factor 1 (Xenopus tropicalis (Western clawed frog)).